A 140-amino-acid polypeptide reads, in one-letter code: Nucleoside diphosphate kinase (140 aa).

6 residues coordinate ATP: lysine 11, phenylalanine 59, arginine 87, threonine 93, arginine 104, and asparagine 114. Histidine 117 functions as the Pros-phosphohistidine intermediate in the catalytic mechanism.

This sequence belongs to the NDK family. In terms of assembly, homotetramer. Mg(2+) serves as cofactor.

It localises to the cytoplasm. The catalysed reaction is a 2'-deoxyribonucleoside 5'-diphosphate + ATP = a 2'-deoxyribonucleoside 5'-triphosphate + ADP. It catalyses the reaction a ribonucleoside 5'-diphosphate + ATP = a ribonucleoside 5'-triphosphate + ADP. Functionally, major role in the synthesis of nucleoside triphosphates other than ATP. The ATP gamma phosphate is transferred to the NDP beta phosphate via a ping-pong mechanism, using a phosphorylated active-site intermediate. The protein is Nucleoside diphosphate kinase of Rhizobium meliloti (strain 1021) (Ensifer meliloti).